Consider the following 366-residue polypeptide: Histidinol-phosphate aminotransferase (366 aa).

Lys-228 is subject to N6-(pyridoxal phosphate)lysine.

The protein belongs to the class-II pyridoxal-phosphate-dependent aminotransferase family. Histidinol-phosphate aminotransferase subfamily. Homodimer. Requires pyridoxal 5'-phosphate as cofactor.

The enzyme catalyses L-histidinol phosphate + 2-oxoglutarate = 3-(imidazol-4-yl)-2-oxopropyl phosphate + L-glutamate. Its pathway is amino-acid biosynthesis; L-histidine biosynthesis; L-histidine from 5-phospho-alpha-D-ribose 1-diphosphate: step 7/9. The polypeptide is Histidinol-phosphate aminotransferase (Stutzerimonas stutzeri (Pseudomonas stutzeri)).